Here is a 949-residue protein sequence, read N- to C-terminus: MAM domain-containing glycosylphosphatidylinositol anchor protein 2 (949 aa).

An N-terminal signal peptide occupies residues 1 to 25; the sequence is MDLVYGLVWLLTVLLEGISGQGVYA. Ig-like domains follow at residues 27-127 and 134-232; these read PTVR…IRVD and PVVT…KMVS. Intrachain disulfides connect cysteine 62/cysteine 110 and cysteine 159/cysteine 216. Residues asparagine 92, asparagine 213, and asparagine 237 are each glycosylated (N-linked (GlcNAc...) asparagine). 4 Ig-like domains span residues 242 to 328, 340 to 436, 442 to 533, and 540 to 627; these read PSIK…NIIV, PDPY…VNIS, PNLT…ALVQ, and PAVE…FLVT. Intrachain disulfides connect cysteine 264-cysteine 310 and cysteine 359-cysteine 417. 5 N-linked (GlcNAc...) asparagine glycosylation sites follow: asparagine 434, asparagine 443, asparagine 504, asparagine 610, and asparagine 703. Cystine bridges form between cysteine 465–cysteine 515 and cysteine 561–cysteine 611. The Fibronectin type-III domain occupies 638 to 738; it reads DTYNPVWQNR…TIRVIKYTGE (101 aa). Positions 739 to 914 constitute an MAM domain; the sequence is FHCGFEDGNI…VSIAEGECAK (176 aa). The GPI-anchor amidated aspartate moiety is linked to residue aspartate 924. Positions 925 to 949 are cleaved as a propeptide — removed in mature form; it reads GAVGILVHIWLFPVIILISILSPRR.

As to quaternary structure, interacts (through the Ig-like domains) with NLGN2.

The protein resides in the cell membrane. In terms of biological role, may be involved in cell-cell interactions. The chain is MAM domain-containing glycosylphosphatidylinositol anchor protein 2 (Mdga2) from Mus musculus (Mouse).